We begin with the raw amino-acid sequence, 161 residues long: Cyclic pyranopterin monophosphate synthase (161 aa).

Substrate-binding positions include 75–77 and 113–114; these read LCH and ME. Asp128 is a catalytic residue.

Belongs to the MoaC family. As to quaternary structure, homohexamer; trimer of dimers.

The catalysed reaction is (8S)-3',8-cyclo-7,8-dihydroguanosine 5'-triphosphate = cyclic pyranopterin phosphate + diphosphate. Its pathway is cofactor biosynthesis; molybdopterin biosynthesis. In terms of biological role, catalyzes the conversion of (8S)-3',8-cyclo-7,8-dihydroguanosine 5'-triphosphate to cyclic pyranopterin monophosphate (cPMP). This chain is Cyclic pyranopterin monophosphate synthase, found in Escherichia coli O139:H28 (strain E24377A / ETEC).